The chain runs to 137 residues: Large ribosomal subunit protein uL22 (137 aa).

It belongs to the universal ribosomal protein uL22 family. Part of the 50S ribosomal subunit.

Its function is as follows. This protein binds specifically to 23S rRNA; its binding is stimulated by other ribosomal proteins, e.g. L4, L17, and L20. It is important during the early stages of 50S assembly. It makes multiple contacts with different domains of the 23S rRNA in the assembled 50S subunit and ribosome. The globular domain of the protein is located near the polypeptide exit tunnel on the outside of the subunit, while an extended beta-hairpin is found that lines the wall of the exit tunnel in the center of the 70S ribosome. In Flavobacterium psychrophilum (strain ATCC 49511 / DSM 21280 / CIP 103535 / JIP02/86), this protein is Large ribosomal subunit protein uL22.